The sequence spans 868 residues: DNA mismatch repair protein MutS (868 aa).

Residue 623-630 (GPNMAGKS) participates in ATP binding.

Belongs to the DNA mismatch repair MutS family.

Its function is as follows. This protein is involved in the repair of mismatches in DNA. It is possible that it carries out the mismatch recognition step. This protein has a weak ATPase activity. The sequence is that of DNA mismatch repair protein MutS from Magnetococcus marinus (strain ATCC BAA-1437 / JCM 17883 / MC-1).